A 195-amino-acid chain; its full sequence is Protein GrpE (195 aa).

This sequence belongs to the GrpE family. As to quaternary structure, homodimer.

It is found in the cytoplasm. Participates actively in the response to hyperosmotic and heat shock by preventing the aggregation of stress-denatured proteins, in association with DnaK and GrpE. It is the nucleotide exchange factor for DnaK and may function as a thermosensor. Unfolded proteins bind initially to DnaJ; upon interaction with the DnaJ-bound protein, DnaK hydrolyzes its bound ATP, resulting in the formation of a stable complex. GrpE releases ADP from DnaK; ATP binding to DnaK triggers the release of the substrate protein, thus completing the reaction cycle. Several rounds of ATP-dependent interactions between DnaJ, DnaK and GrpE are required for fully efficient folding. This chain is Protein GrpE, found in Blochmanniella floridana.